The following is a 184-amino-acid chain: Potassium-transporting ATPase KdpC subunit (184 aa).

The helical transmembrane segment at Leu10–Ala30 threads the bilayer.

The protein belongs to the KdpC family. As to quaternary structure, the system is composed of three essential subunits: KdpA, KdpB and KdpC.

It is found in the cell inner membrane. Part of the high-affinity ATP-driven potassium transport (or Kdp) system, which catalyzes the hydrolysis of ATP coupled with the electrogenic transport of potassium into the cytoplasm. This subunit acts as a catalytic chaperone that increases the ATP-binding affinity of the ATP-hydrolyzing subunit KdpB by the formation of a transient KdpB/KdpC/ATP ternary complex. This is Potassium-transporting ATPase KdpC subunit from Flavobacterium psychrophilum (strain ATCC 49511 / DSM 21280 / CIP 103535 / JIP02/86).